The sequence spans 468 residues: 6-phosphogluconate dehydrogenase, decarboxylating (468 aa).

Residues 9-14 (GLAVMG), 32-34 (NRS), 73-75 (VQA), and Asn101 each bind NADP(+). Substrate-binding positions include Asn101 and 127-129 (SGG). The Proton acceptor role is filled by Lys182. 185–186 (HN) serves as a coordination point for substrate. The active-site Proton donor is the Glu189. 5 residues coordinate substrate: Tyr190, Lys259, Arg286, Arg444, and His450.

It belongs to the 6-phosphogluconate dehydrogenase family. Homodimer.

It catalyses the reaction 6-phospho-D-gluconate + NADP(+) = D-ribulose 5-phosphate + CO2 + NADPH. It functions in the pathway carbohydrate degradation; pentose phosphate pathway; D-ribulose 5-phosphate from D-glucose 6-phosphate (oxidative stage): step 3/3. In terms of biological role, catalyzes the oxidative decarboxylation of 6-phosphogluconate to ribulose 5-phosphate and CO(2), with concomitant reduction of NADP to NADPH. The polypeptide is 6-phosphogluconate dehydrogenase, decarboxylating (gnd) (Staphylococcus aureus (strain Mu50 / ATCC 700699)).